A 189-amino-acid chain; its full sequence is MRRQLLPALTMLLVFTVITGIVYPLAVTGVGQLFFGDQANGALLERDGQVIGSAHIGQQFTAAKYFHPRPSSAGDGYDAAASSGSNLGPTNEKLLAAVAERVTAYRKENNLPADTLVPVDAVTGSGSGLDPAISVVNAKLQAPRVAQARNISIRQVERLIEDHTDARGLGFLGERAVNVLRLNLALDRL.

A helical membrane pass occupies residues 5–25 (LLPALTMLLVFTVITGIVYPL).

The protein belongs to the KdpC family. The system is composed of three essential subunits: KdpA, KdpB and KdpC.

Its subcellular location is the cell membrane. Its function is as follows. Part of the high-affinity ATP-driven potassium transport (or Kdp) system, which catalyzes the hydrolysis of ATP coupled with the electrogenic transport of potassium into the cytoplasm. This subunit acts as a catalytic chaperone that increases the ATP-binding affinity of the ATP-hydrolyzing subunit KdpB by the formation of a transient KdpB/KdpC/ATP ternary complex. This chain is Potassium-transporting ATPase KdpC subunit, found in Mycobacterium bovis (strain ATCC BAA-935 / AF2122/97).